A 156-amino-acid polypeptide reads, in one-letter code: MNLNATILGQAIAFVLFVLFCMKYVWPPLMASIEKRQKEIADGLASAERAKKDLDIAQAEATDHLKQAKVEAQAIIEQANKRKAQVVDEAKAEAEAERNKILAQAQAEIDAERKRAREELRKQVAMLALAGAEKIIERSVDDAANSDIVDKIVAEL.

The helical transmembrane segment at 11–31 threads the bilayer; that stretch reads AIAFVLFVLFCMKYVWPPLMA.

This sequence belongs to the ATPase B chain family. As to quaternary structure, F-type ATPases have 2 components, F(1) - the catalytic core - and F(0) - the membrane proton channel. F(1) has five subunits: alpha(3), beta(3), gamma(1), delta(1), epsilon(1). F(0) has three main subunits: a(1), b(2) and c(10-14). The alpha and beta chains form an alternating ring which encloses part of the gamma chain. F(1) is attached to F(0) by a central stalk formed by the gamma and epsilon chains, while a peripheral stalk is formed by the delta and b chains.

The protein resides in the cell inner membrane. F(1)F(0) ATP synthase produces ATP from ADP in the presence of a proton or sodium gradient. F-type ATPases consist of two structural domains, F(1) containing the extramembraneous catalytic core and F(0) containing the membrane proton channel, linked together by a central stalk and a peripheral stalk. During catalysis, ATP synthesis in the catalytic domain of F(1) is coupled via a rotary mechanism of the central stalk subunits to proton translocation. Functionally, component of the F(0) channel, it forms part of the peripheral stalk, linking F(1) to F(0). The protein is ATP synthase subunit b of Sodalis glossinidius (strain morsitans).